We begin with the raw amino-acid sequence, 306 residues long: tRNA dimethylallyltransferase 2 (306 aa).

Gly-11 to Thr-18 contacts ATP. Position 13 to 18 (Thr-13 to Thr-18) interacts with substrate. The segment at Asp-36 to Gln-39 is interaction with substrate tRNA.

Belongs to the IPP transferase family. In terms of assembly, monomer. The cofactor is Mg(2+).

The catalysed reaction is adenosine(37) in tRNA + dimethylallyl diphosphate = N(6)-dimethylallyladenosine(37) in tRNA + diphosphate. Functionally, catalyzes the transfer of a dimethylallyl group onto the adenine at position 37 in tRNAs that read codons beginning with uridine, leading to the formation of N6-(dimethylallyl)adenosine (i(6)A). This Bacteroides thetaiotaomicron (strain ATCC 29148 / DSM 2079 / JCM 5827 / CCUG 10774 / NCTC 10582 / VPI-5482 / E50) protein is tRNA dimethylallyltransferase 2.